The following is a 937-amino-acid chain: uncharacterized protein (937 aa).

At threonine 2 the chain carries N-acetylthreonine. The tract at residues 281–937 (NESPSSNINT…KKGKGKGGRK (657 aa)) is disordered. Positions 290–308 (TTTTSTTTTTTTTTSSPVV) are enriched in low complexity. Catalysis depends on threonine 292, which acts as the Charge relay system. Composition is skewed to basic and acidic residues over residues 309-402 (EESK…EKQQ), 411-431 (AEKE…RLEA), 469-489 (AEKE…KLEA), 512-532 (AEKE…KLEA), 600-615 (AEKE…KLEA), 667-687 (AEKE…KLEA), 738-758 (AEKE…RLEA), and 780-872 (AEKE…KVEE). Positions 345–802 (VDDSKEKEEK…KAAEETKVEE (458 aa)) form a coiled coil. Over residues 887–897 (EETEEGEEVDE) the composition is skewed to acidic residues. The segment covering 898–924 (ASNTTTEQTTTNANQPKKPNNNNNNNK) has biased composition (low complexity). Residues 925 to 937 (GKGKKGKGKGGRK) show a composition bias toward basic residues.

Belongs to the AB hydrolase superfamily.

This is an uncharacterized protein from Dictyostelium discoideum (Social amoeba).